Here is a 213-residue protein sequence, read N- to C-terminus: Probable RNA 2'-phosphotransferase (213 aa).

It belongs to the KptA/TPT1 family.

Functionally, removes the 2'-phosphate from RNA via an intermediate in which the phosphate is ADP-ribosylated by NAD followed by a presumed transesterification to release the RNA and generate ADP-ribose 1''-2''-cyclic phosphate (APPR&gt;P). May function as an ADP-ribosylase. The sequence is that of Probable RNA 2'-phosphotransferase from Pyrobaculum aerophilum (strain ATCC 51768 / DSM 7523 / JCM 9630 / CIP 104966 / NBRC 100827 / IM2).